An 88-amino-acid polypeptide reads, in one-letter code: Large ribosomal subunit protein eL15 (88 aa).

The protein belongs to the eukaryotic ribosomal protein eL15 family.

The sequence is that of Large ribosomal subunit protein eL15 (RPL15) from Brassica napus (Rape).